Here is a 471-residue protein sequence, read N- to C-terminus: ATP synthase subunit beta (471 aa).

An ATP-binding site is contributed by glycine 152–threonine 159.

Belongs to the ATPase alpha/beta chains family. As to quaternary structure, F-type ATPases have 2 components, CF(1) - the catalytic core - and CF(0) - the membrane proton channel. CF(1) has five subunits: alpha(3), beta(3), gamma(1), delta(1), epsilon(1). CF(0) has three main subunits: a(1), b(2) and c(9-12). The alpha and beta chains form an alternating ring which encloses part of the gamma chain. CF(1) is attached to CF(0) by a central stalk formed by the gamma and epsilon chains, while a peripheral stalk is formed by the delta and b chains.

The protein resides in the cell membrane. It carries out the reaction ATP + H2O + 4 H(+)(in) = ADP + phosphate + 5 H(+)(out). Functionally, produces ATP from ADP in the presence of a proton gradient across the membrane. The catalytic sites are hosted primarily by the beta subunits. The chain is ATP synthase subunit beta from Herpetosiphon aurantiacus (strain ATCC 23779 / DSM 785 / 114-95).